A 793-amino-acid chain; its full sequence is Probable exo-1,4-beta-xylosidase xlnD (793 aa).

The signal sequence occupies residues 1–20 (MPRVASVAAVLAALLPSALG). N-linked (GlcNAc...) asparagine glycosylation is found at N23, N87, and N142. D310 is an active-site residue. N326, N385, N404, N440, N477, N518, N559, N614, N652, N679, and N701 each carry an N-linked (GlcNAc...) asparagine glycan.

It belongs to the glycosyl hydrolase 3 family.

Its subcellular location is the secreted. The catalysed reaction is Hydrolysis of (1-&gt;4)-beta-D-xylans, to remove successive D-xylose residues from the non-reducing termini.. Its pathway is glycan degradation; xylan degradation. Functionally, xylan 1,4-beta-xylosidase involved in the hydrolysis of xylan, a major structural heterogeneous polysaccharide found in plant biomass representing the second most abundant polysaccharide in the biosphere, after cellulose. This chain is Probable exo-1,4-beta-xylosidase xlnD (xlnD), found in Aspergillus terreus (strain NIH 2624 / FGSC A1156).